We begin with the raw amino-acid sequence, 174 residues long: Co-chaperone protein HscB (174 aa).

The J domain maps to 2–74; the sequence is DYFTLFGLPA…LKRAEYMLSL (73 aa).

It belongs to the HscB family. In terms of assembly, interacts with HscA and stimulates its ATPase activity. Interacts with IscU.

In terms of biological role, co-chaperone involved in the maturation of iron-sulfur cluster-containing proteins. Seems to help targeting proteins to be folded toward HscA. In Yersinia pestis bv. Antiqua (strain Antiqua), this protein is Co-chaperone protein HscB.